The primary structure comprises 146 residues: Vascular endothelial growth factor A (146 aa).

Positions 1–26 are cleaved as a signal peptide; that stretch reads MNFLLSWVHWSLALLLYLHHAKWSQA. 3 cysteine pairs are disulfide-bonded: cysteine 51–cysteine 93, cysteine 82–cysteine 127, and cysteine 86–cysteine 129. N-linked (GlcNAc...) asparagine glycosylation occurs at asparagine 100.

Belongs to the PDGF/VEGF growth factor family. As to quaternary structure, homodimer; disulfide-linked. Also found as heterodimer with PGF. Interacts with NRP1. Interacts with isoform 2 of BSG. Interacts with CD82; this interaction inhibits VEGFA-mediated signaling pathway.

Growth factor active in angiogenesis, vasculogenesis and endothelial cell growth. Induces endothelial cell proliferation, promotes cell migration, inhibits apoptosis and induces permeabilization of blood vessels. Binds to the FLT1/VEGFR1 and KDR/VEGFR2 receptors, heparan sulfate and heparin. Binding to NRP1 receptor initiates a signaling pathway needed for motor neuron axon guidance and cell body migration, including for the caudal migration of facial motor neurons from rhombomere 4 to rhombomere 6 during embryonic development. Also binds the DEAR/FBXW7-AS1 receptor. In Ovis aries (Sheep), this protein is Vascular endothelial growth factor A (VEGFA).